We begin with the raw amino-acid sequence, 129 residues long: Small ribosomal subunit protein uS11 (129 aa).

The protein belongs to the universal ribosomal protein uS11 family. In terms of assembly, part of the 30S ribosomal subunit. Interacts with proteins S7 and S18. Binds to IF-3.

In terms of biological role, located on the platform of the 30S subunit, it bridges several disparate RNA helices of the 16S rRNA. Forms part of the Shine-Dalgarno cleft in the 70S ribosome. The chain is Small ribosomal subunit protein uS11 from Desulfitobacterium hafniense (strain DSM 10664 / DCB-2).